A 238-amino-acid polypeptide reads, in one-letter code: Ribosomal RNA small subunit methyltransferase G (238 aa).

S-adenosyl-L-methionine contacts are provided by residues glycine 106, leucine 111, 157 to 158 (IE), and arginine 170.

It belongs to the methyltransferase superfamily. RNA methyltransferase RsmG family.

The protein resides in the cytoplasm. The enzyme catalyses guanosine(527) in 16S rRNA + S-adenosyl-L-methionine = N(7)-methylguanosine(527) in 16S rRNA + S-adenosyl-L-homocysteine. Specifically methylates the N7 position of guanine in position 527 of 16S rRNA. The chain is Ribosomal RNA small subunit methyltransferase G from Psychrobacter cryohalolentis (strain ATCC BAA-1226 / DSM 17306 / VKM B-2378 / K5).